The following is a 233-amino-acid chain: Large ribosomal subunit protein uL1 (233 aa).

It belongs to the universal ribosomal protein uL1 family. As to quaternary structure, part of the 50S ribosomal subunit.

Functionally, binds directly to 23S rRNA. The L1 stalk is quite mobile in the ribosome, and is involved in E site tRNA release. Protein L1 is also a translational repressor protein, it controls the translation of the L11 operon by binding to its mRNA. The chain is Large ribosomal subunit protein uL1 from Paracoccus denitrificans (strain Pd 1222).